Reading from the N-terminus, the 297-residue chain is Palmitoyl-protein thioesterase ABHD10, mitochondrial (297 aa).

The N-terminal 43 residues, 1 to 43 (MAAWVPCRKWGWAAVSFGRHRGLIASLARKPPWAWWLSACRQK), are a transit peptide targeting the mitochondrion. The region spanning 69–181 (IIFIPGYLSN…GVVTQFHSLP (113 aa)) is the AB hydrolase-1 domain. Active-site charge relay system residues include S143, D240, and H270.

It belongs to the AB hydrolase superfamily. Expressed in epididymal sperm but not in testicular sperm (at protein level).

It localises to the mitochondrion. The catalysed reaction is S-hexadecanoyl-L-cysteinyl-[protein] + H2O = L-cysteinyl-[protein] + hexadecanoate + H(+). It catalyses the reaction mycophenolic acid O-acyl-beta-D-glucuronide + H2O = mycophenolate + D-glucuronate + H(+). With respect to regulation, inhibited by palmostatin-B. Its function is as follows. Acts as an acyl-protein thioesterase that hydrolyzes fatty acids from acylated residues in proteins. Regulates the mitochondrial S-depalmitoylation of the nucleophilic active site residue of peroxiredoxin-5/PRDX5, a key antioxidant protein, therefore modulating mitochondrial antioxidant ability. Also catalyzes the deglucuronidation of mycophenolic acid acyl-glucuronide, an active metabolite of the immunosuppressant drug mycophenolate. The polypeptide is Palmitoyl-protein thioesterase ABHD10, mitochondrial (Rattus norvegicus (Rat)).